The primary structure comprises 185 residues: Ribosome-recycling factor (185 aa).

This sequence belongs to the RRF family.

Its subcellular location is the cytoplasm. Responsible for the release of ribosomes from messenger RNA at the termination of protein biosynthesis. May increase the efficiency of translation by recycling ribosomes from one round of translation to another. This chain is Ribosome-recycling factor, found in Mycobacterium bovis (strain BCG / Pasteur 1173P2).